The chain runs to 225 residues: C-reactive protein (225 aa).

Residues 1-19 (MEKLLWCLLIMISFSRTFG) form the signal peptide. A Pentraxin (PTX) domain is found at 24 to 225 (FKKAFVFPKE…DVFIKPQLWS (202 aa)). Cys-55 and Cys-116 are disulfide-bonded. Residues Asn-80, Glu-157, Gln-158, Asp-159, and Gln-169 each contribute to the Ca(2+) site.

This sequence belongs to the pentraxin family. Homopentamer. Pentraxin (or pentaxin) have a discoid arrangement of 5 non-covalently bound subunits. Interacts with FCN1; may regulate monocyte activation by FCN1. Ca(2+) is required as a cofactor. As to expression, found in plasma.

It localises to the secreted. Functionally, displays several functions associated with host defense: it promotes agglutination, bacterial capsular swelling, phagocytosis and complement fixation through its calcium-dependent binding to phosphorylcholine. Can interact with DNA and histones and may scavenge nuclear material released from damaged circulating cells. The sequence is that of C-reactive protein (Crp) from Mus musculus (Mouse).